The sequence spans 521 residues: 2,3-bisphosphoglycerate-independent phosphoglycerate mutase (521 aa).

Mn(2+) is bound by residues aspartate 18 and serine 68. The Phosphoserine intermediate role is filled by serine 68. Residues histidine 129, 158–159, arginine 190, arginine 196, 266–269, and lysine 343 contribute to the substrate site; these read RD and RSDR. Residues aspartate 410, histidine 414, aspartate 451, histidine 452, and histidine 470 each coordinate Mn(2+).

The protein belongs to the BPG-independent phosphoglycerate mutase family. In terms of assembly, monomer. The cofactor is Mn(2+).

It carries out the reaction (2R)-2-phosphoglycerate = (2R)-3-phosphoglycerate. Its pathway is carbohydrate degradation; glycolysis; pyruvate from D-glyceraldehyde 3-phosphate: step 3/5. In terms of biological role, catalyzes the interconversion of 2-phosphoglycerate and 3-phosphoglycerate. The polypeptide is 2,3-bisphosphoglycerate-independent phosphoglycerate mutase (Hydrogenovibrio crunogenus (strain DSM 25203 / XCL-2) (Thiomicrospira crunogena)).